Consider the following 150-residue polypeptide: CCAAT/enhancer-binding protein gamma (150 aa).

K3 is covalently cross-linked (Glycyl lysine isopeptide (Lys-Gly) (interchain with G-Cter in SUMO2)). The tract at residues 27–94 (GLQQVPQLVP…QKAQDTLQRV (68 aa)) is disordered. The span at 28–37 (LQQVPQLVPA) shows a compositional bias: low complexity. Positions 56-72 (SPMDRNSDEYRQRRERN) are enriched in basic and acidic residues. Positions 62–125 (SDEYRQRRER…SVLKDLFLEH (64 aa)) constitute a bZIP domain. The interval 66 to 93 (RQRRERNNMAVKKSRLKSKQKAQDTLQR) is basic motif. The interval 97–118 (LKEENERLEAKIKLLTKELSVL) is leucine-zipper. The segment at 129–150 (LADNVQPISTETTATNSDNPGQ) is disordered. The span at 134-150 (QPISTETTATNSDNPGQ) shows a compositional bias: polar residues.

Belongs to the bZIP family. C/EBP subfamily. Binds DNA as a dimer and can form stable heterodimers with CEBPA. Can form stable heterodimers with CEBPB. Interacts with ZNF638; this interaction increases transcriptional activation. In terms of tissue distribution, ubiquitous.

The protein resides in the nucleus. Transcription factor that binds to the promoter and the enhancer regions of target genes. Binds to the promoter and the enhancer of the immunoglobulin heavy chain. Binds to GPE1, a cis-acting element in the G-CSF gene promoter. Binds to the enhancer element PRE-I (positive regulatory element-I) of the IL-4 gene. Binds to the promoter and the enhancer of the alpha-1-fetoprotein gene. The polypeptide is CCAAT/enhancer-binding protein gamma (Cebpg) (Mus musculus (Mouse)).